Consider the following 709-residue polypeptide: Protein white (709 aa).

The disordered stretch occupies residues 1 to 35 (MTINTDDQYADGESKTTISSNRRYSTSSFQDQSME). Polar residues predominate over residues 15-32 (KTTISSNRRYSTSSFQDQ). Residues 103–348 (FTRQRLVKDF…SQLGIPCPPN (246 aa)) form the ABC transporter domain. Residues 136-143 (GSSGAGKT) and 292-299 (GMAMKGKT) contribute to the ATP site. A helical membrane pass occupies residues 457 to 475 (LLQTAMVASLIGSIYFGQV). A glycan (N-linked (GlcNAc...) asparagine) is linked at N485. 4 consecutive transmembrane segments (helical) span residues 487–507 (SLFL…INVF), 537–555 (LPLF…YPMI), 564–585 (YLTT…GYLI), and 598–616 (VGPP…FLNS). Residue N658 is glycosylated (N-linked (GlcNAc...) asparagine). Residues 681-700 (LDIGCLFALIVLFRLGALFC) form a helical membrane-spanning segment.

Belongs to the ABC transporter superfamily. ABCG family. Eye pigment precursor importer (TC 3.A.1.204) subfamily.

It is found in the membrane. May be part of a membrane-spanning permease system necessary for the transport of pigment precursors into pigment cells responsible for eye color. This Anopheles albimanus (New world malaria mosquito) protein is Protein white (W).